The sequence spans 133 residues: Nickel-responsive regulator (133 aa).

H76, H87, H89, and C95 together coordinate Ni(2+).

This sequence belongs to the transcriptional regulatory CopG/NikR family. As to quaternary structure, homotetramer. Ni(2+) serves as cofactor.

In terms of biological role, transcriptional repressor of the nikABCDE operon. Is active in the presence of excessive concentrations of intracellular nickel. The sequence is that of Nickel-responsive regulator from Escherichia coli (strain SMS-3-5 / SECEC).